Reading from the N-terminus, the 225-residue chain is Pre-mRNA-splicing factor SPF27 (225 aa).

The residue at position 2 (Ala2) is an N-acetylalanine. Residue Ser94 is modified to Phosphoserine. Residues 138–222 are a coiled coil; that stretch reads YNENLVHMIE…HGEANKENIR (85 aa).

It belongs to the SPF27 family. Component of the pre-catalytic and catalytic spliceosome complexes. Component of the postcatalytic spliceosome P complex. Component of the PRP19-CDC5L splicing complex composed of a core complex comprising a homotetramer of PRPF19, CDC5L, PLRG1 and BCAS2, and at least three less stably associated proteins CTNNBL1, CWC15 and HSPA8. Interacts directly in the complex with PRPF19, CDC5L and PLRG1. As to expression, ubiquitously expressed.

The protein localises to the nucleus. The protein resides in the nucleolus. Its function is as follows. Required for pre-mRNA splicing as component of the activated spliceosome. Component of the PRP19-CDC5L complex that forms an integral part of the spliceosome and is required for activating pre-mRNA splicing. May have a scaffolding role in the spliceosome assembly as it contacts all other components of the core complex. The PRP19-CDC5L complex may also play a role in the response to DNA damage (DDR). This chain is Pre-mRNA-splicing factor SPF27 (BCAS2), found in Homo sapiens (Human).